The chain runs to 298 residues: MKIAILSREPRNYSTRRLVEVAQARGHQVEVLDTLRCYMNIASHSPSIHYEGRELESYDAVIPRIGASITFYGTAVLRQFEMMNTMALNSSVAISRSRDKLRAMQLLSRHGIGLPITGYAHSTHDVPDLITMVGGAPLVVKLLEGTQGIGVVLCETHKAAESVIEAFIQTNNNILVQEYIREANGADIRCLVVNGKVVAAMRRQAQPGEFRSNLHRGGTAEAIKISPEERATAVQAAKIMGLDVAGVDILRSARGPLVLEVNSSPGLQGVEAASGKDVAGKIIEFLELKASRKNKPAE.

In terms of domain architecture, ATP-grasp spans 104 to 287 (MQLLSRHGIG…VAGKIIEFLE (184 aa)). ATP-binding positions include Lys-141, 178 to 179 (EY), Asp-187, and 211 to 213 (RSN). Residues Asp-248, Glu-260, and Asn-262 each contribute to the Mg(2+) site. Residues Asp-248, Glu-260, and Asn-262 each contribute to the Mn(2+) site.

It belongs to the RimK family. It depends on Mg(2+) as a cofactor. The cofactor is Mn(2+).

In Aeromonas salmonicida (strain A449), this protein is Probable alpha-L-glutamate ligase.